The sequence spans 304 residues: Lipid droplet-associated triacylglycerol lipase (304 aa).

Over 1 to 155 the chain is Lumenal; that stretch reads MTVKEYTKSK…MGIKMTAALR (155 aa). The N-linked (GlcNAc...) asparagine glycan is linked to N95. The GXSXG motif lies at 107-111; that stretch reads GHSVG. The Nucleophile role is filled by S109. Residues 156 to 176 lie within the membrane without spanning it; that stretch reads YIPPLAHVVSLFSYIFFYWIL. Over 177–304 the chain is Lumenal; it reads SEGFSRFIID…HAEYAINAFF (128 aa).

The protein belongs to the AB hydrolase superfamily. LDAH family.

The protein resides in the lipid droplet. It is found in the membrane. It carries out the reaction a triacylglycerol + H2O = a diacylglycerol + a fatty acid + H(+). In terms of biological role, shows both triacylglycerol (TAG) lipase and ester hydrolase activities. May play a role in TAG homeostasis. This Saccharomyces cerevisiae (strain ATCC 204508 / S288c) (Baker's yeast) protein is Lipid droplet-associated triacylglycerol lipase.